The chain runs to 160 residues: Protein cornichon homolog 2 (160 aa).

Over 1–10 (MAFTFAAFCY) the chain is Cytoplasmic. The helical transmembrane segment at 11 to 31 (MLTLVLCASLIFFVIWHIIAF) threads the bilayer. Residues 32–72 (DELRTDFKNPIDQGNPARARERLKNIERICCLLRKLVVPEY) lie on the Lumenal side of the membrane. The chain crosses the membrane as a helical span at residues 73-93 (CIHGLFCLMFLCAAEWVTLGL). The Cytoplasmic segment spans residues 94–138 (NLPLLLYHLWRYFHRPSDGSEGLFDAVSIMDADILGYCQKEAWCK). A helical transmembrane segment spans residues 139–159 (LAFYLLSFFYYLYSMVYTLVS). A topological domain (lumenal) is located at residue Phe160.

This sequence belongs to the cornichon family. As to quaternary structure, interacts with HBEGF. As to expression, expressed in the odd-numbered neuromeres (r3 and r5) of the developing hindbrain.

The protein resides in the membrane. Its function is as follows. Regulates the trafficking and gating properties of AMPA-selective glutamate receptors (AMPARs). Plays an important role in the proper development of cranial nerves by facilitating the secretion of HBEGF. In Gallus gallus (Chicken), this protein is Protein cornichon homolog 2 (CNIH2).